We begin with the raw amino-acid sequence, 94 residues long: Progonadoliberin-3 (94 aa).

Residues 1–23 (MEGKGRVLVQLLMLACVLEVSLC) form the signal peptide. Glutamine 24 bears the Pyrrolidone carboxylic acid mark. A Glycine amide modification is found at glycine 33.

This sequence belongs to the GnRH family.

It is found in the secreted. In terms of biological role, stimulates the secretion of gonadotropins. This Carassius auratus (Goldfish) protein is Progonadoliberin-3 (gnrh3).